A 112-amino-acid polypeptide reads, in one-letter code: FK506-binding protein 1A (112 aa).

In terms of domain architecture, PPIase FKBP-type spans 20–108 (GDFVTIHYTG…IFEVELLGIN (89 aa)).

The protein belongs to the FKBP-type PPIase family. FKBP1 subfamily.

The protein localises to the cytoplasm. It carries out the reaction [protein]-peptidylproline (omega=180) = [protein]-peptidylproline (omega=0). With respect to regulation, inhibited by both FK506 and rapamycin. PPIases accelerate the folding of proteins. It catalyzes the cis-trans isomerization of proline imidic peptide bonds in oligopeptides. The polypeptide is FK506-binding protein 1A (fpr1A) (Aspergillus fumigatus (strain ATCC MYA-4609 / CBS 101355 / FGSC A1100 / Af293) (Neosartorya fumigata)).